A 118-amino-acid polypeptide reads, in one-letter code: Basic phospholipase A2 PA-15 (118 aa).

7 disulfides stabilise this stretch: Cys11/Cys71, Cys27/Cys117, Cys29/Cys45, Cys44/Cys98, Cys51/Cys91, Cys60/Cys84, and Cys78/Cys89. Positions 28, 30, and 32 each coordinate Ca(2+). His48 is a catalytic residue. Position 49 (Asp49) interacts with Ca(2+). Asp92 is an active-site residue.

The protein belongs to the phospholipase A2 family. Group I subfamily. D49 sub-subfamily. Ca(2+) is required as a cofactor. Expressed by the venom gland.

The protein localises to the secreted. It carries out the reaction a 1,2-diacyl-sn-glycero-3-phosphocholine + H2O = a 1-acyl-sn-glycero-3-phosphocholine + a fatty acid + H(+). PLA2 catalyzes the calcium-dependent hydrolysis of the 2-acyl groups in 3-sn-phosphoglycerides. The sequence is that of Basic phospholipase A2 PA-15 from Pseudechis australis (Mulga snake).